The chain runs to 137 residues: Bet1-like protein At4g14600 (137 aa).

The Cytoplasmic segment spans residues 1 to 113 (MASNPHRSGA…MSIIRSGNNH (113 aa)). Residues 43–105 (DPMHSDLDDE…KNNIRKLNMS (63 aa)) enclose the t-SNARE coiled-coil homology domain. The chain crosses the membrane as a helical; Anchor for type IV membrane protein span at residues 114 to 134 (IMHVVLFALLVFFVLYIWSKM). Residues 135–137 (FKR) are Vesicular-facing.

This sequence belongs to the BET1 family.

It localises to the golgi apparatus membrane. The protein resides in the endoplasmic reticulum membrane. In terms of biological role, required for vesicular transport from the ER to the Golgi complex. Functions as a SNARE associated with ER-derived vesicles. The chain is Bet1-like protein At4g14600 from Arabidopsis thaliana (Mouse-ear cress).